The sequence spans 185 residues: Ribosome-recycling factor (185 aa).

Belongs to the RRF family.

The protein localises to the cytoplasm. Responsible for the release of ribosomes from messenger RNA at the termination of protein biosynthesis. May increase the efficiency of translation by recycling ribosomes from one round of translation to another. This is Ribosome-recycling factor from Pelobacter propionicus (strain DSM 2379 / NBRC 103807 / OttBd1).